The sequence spans 104 residues: Putative membrane protein insertion efficiency factor (104 aa).

A disordered region spans residues 83-104; the sequence is SSPTPLAESPDDRTVPHTQETS.

The protein belongs to the UPF0161 family.

Its subcellular location is the cell inner membrane. Functionally, could be involved in insertion of integral membrane proteins into the membrane. The chain is Putative membrane protein insertion efficiency factor from Chlamydia trachomatis serovar D (strain ATCC VR-885 / DSM 19411 / UW-3/Cx).